Consider the following 601-residue polypeptide: Arginine--tRNA ligase (601 aa).

The 'HIGH' region signature appears at 135 to 145 (ANPTGPLHLGH).

The protein belongs to the class-I aminoacyl-tRNA synthetase family. As to quaternary structure, monomer.

Its subcellular location is the cytoplasm. The catalysed reaction is tRNA(Arg) + L-arginine + ATP = L-arginyl-tRNA(Arg) + AMP + diphosphate. This Gloeobacter violaceus (strain ATCC 29082 / PCC 7421) protein is Arginine--tRNA ligase.